Consider the following 267-residue polypeptide: PHD finger protein ALFIN-LIKE 7 (267 aa).

Residues 162 to 207 (TKVSNGSSKSNKSNPKPSKQSNSNSKPAKPPQPKDEEDSGPEGAED) are disordered. Low complexity predominate over residues 165-188 (SNGSSKSNKSNPKPSKQSNSNSKP). Acidic residues predominate over residues 196–207 (DEEDSGPEGAED). Residues 211 to 263 (AYMCGACGETYANGEFWICCDVCEKWFHGKCVRITPAKAEHIKQYKCPGCSSK) form a PHD-type zinc finger.

This sequence belongs to the Alfin family. In terms of assembly, interacts with H3K4me3 and to a lesser extent with H3K4me2.

The protein resides in the nucleus. Functionally, histone-binding component that specifically recognizes H3 tails trimethylated on 'Lys-4' (H3K4me3), which mark transcription start sites of virtually all active genes. This Oryza sativa subsp. indica (Rice) protein is PHD finger protein ALFIN-LIKE 7.